The chain runs to 257 residues: Thiazole synthase (257 aa).

Lysine 96 serves as the catalytic Schiff-base intermediate with DXP. Residues glycine 157, 184-185 (AG), and 206-207 (NT) each bind 1-deoxy-D-xylulose 5-phosphate.

This sequence belongs to the ThiG family. Homotetramer. Forms heterodimers with either ThiH or ThiS.

The protein resides in the cytoplasm. The enzyme catalyses [ThiS sulfur-carrier protein]-C-terminal-Gly-aminoethanethioate + 2-iminoacetate + 1-deoxy-D-xylulose 5-phosphate = [ThiS sulfur-carrier protein]-C-terminal Gly-Gly + 2-[(2R,5Z)-2-carboxy-4-methylthiazol-5(2H)-ylidene]ethyl phosphate + 2 H2O + H(+). It functions in the pathway cofactor biosynthesis; thiamine diphosphate biosynthesis. Functionally, catalyzes the rearrangement of 1-deoxy-D-xylulose 5-phosphate (DXP) to produce the thiazole phosphate moiety of thiamine. Sulfur is provided by the thiocarboxylate moiety of the carrier protein ThiS. In vitro, sulfur can be provided by H(2)S. In Bartonella quintana (strain Toulouse) (Rochalimaea quintana), this protein is Thiazole synthase.